A 141-amino-acid chain; its full sequence is Large ribosomal subunit protein uL16 (141 aa).

Over residues 1-17 the composition is skewed to basic residues; it reads MLQPKRTKYRKVQKGKM. Positions 1 to 29 are disordered; the sequence is MLQPKRTKYRKVQKGKMKGNSQRGHELSN.

It belongs to the universal ribosomal protein uL16 family. Part of the 50S ribosomal subunit.

In terms of biological role, binds 23S rRNA and is also seen to make contacts with the A and possibly P site tRNAs. This Flavobacterium psychrophilum (strain ATCC 49511 / DSM 21280 / CIP 103535 / JIP02/86) protein is Large ribosomal subunit protein uL16.